A 94-amino-acid polypeptide reads, in one-letter code: Putative pterin-4-alpha-carbinolamine dehydratase (94 aa).

This sequence belongs to the pterin-4-alpha-carbinolamine dehydratase family.

The enzyme catalyses (4aS,6R)-4a-hydroxy-L-erythro-5,6,7,8-tetrahydrobiopterin = (6R)-L-erythro-6,7-dihydrobiopterin + H2O. The chain is Putative pterin-4-alpha-carbinolamine dehydratase from Mycobacterium avium (strain 104).